We begin with the raw amino-acid sequence, 225 residues long: Ribonuclease 3 (225 aa).

The RNase III domain occupies 2–128 (LSTLIKKLKI…LFGAIYLDLG (127 aa)). Glutamate 43 serves as a coordination point for Mg(2+). Aspartate 47 is an active-site residue. Residues asparagine 114 and glutamate 117 each contribute to the Mg(2+) site. Residue glutamate 117 is part of the active site. The 69-residue stretch at 152 to 220 (DFKTQLQELV…ARYVLNILSK (69 aa)) folds into the DRBM domain.

Belongs to the ribonuclease III family. As to quaternary structure, homodimer. The cofactor is Mg(2+).

It localises to the cytoplasm. The catalysed reaction is Endonucleolytic cleavage to 5'-phosphomonoester.. Digests double-stranded RNA. Involved in the processing of primary rRNA transcript to yield the immediate precursors to the large and small rRNAs (23S and 16S). Processes some mRNAs, and tRNAs when they are encoded in the rRNA operon. Processes pre-crRNA and tracrRNA of type II CRISPR loci if present in the organism. This Phytoplasma mali (strain AT) protein is Ribonuclease 3.